Reading from the N-terminus, the 298-residue chain is Ribosomal RNA small subunit methyltransferase H (298 aa).

S-adenosyl-L-methionine is bound by residues 31–33, Asp50, Tyr80, Asp95, and Gln102; that span reads GGH. The interval 255-298 is disordered; the sequence is AEKDLYGNTNKPFKSVGKAIDPDDEEKERNNRARSARLRIAERE.

It belongs to the methyltransferase superfamily. RsmH family.

The protein localises to the cytoplasm. The enzyme catalyses cytidine(1402) in 16S rRNA + S-adenosyl-L-methionine = N(4)-methylcytidine(1402) in 16S rRNA + S-adenosyl-L-homocysteine + H(+). In terms of biological role, specifically methylates the N4 position of cytidine in position 1402 (C1402) of 16S rRNA. The polypeptide is Ribosomal RNA small subunit methyltransferase H (Cytophaga hutchinsonii (strain ATCC 33406 / DSM 1761 / CIP 103989 / NBRC 15051 / NCIMB 9469 / D465)).